The sequence spans 1738 residues: Sodium leak channel NALCN (1738 aa).

Over 1–36 (MLKRKQSSRVEAQPVTDFGPDESLSDNADILWINKP) the chain is Cytoplasmic. A helical transmembrane segment spans residues 37–57 (WVHSLLRICAIISVISVCMNT). Topologically, residues 58 to 65 (PMTFEHYP) are extracellular. The helical transmembrane segment at 66 to 90 (PLQYVTFTLDTLLMFLYTAEMIAKM) threads the bilayer. Residues 91-106 (HIRGIVKGDSSYVKDR) are Cytoplasmic-facing. Residues 107 to 129 (WCVFDGFMVFCLWVSLVLQVFEI) form a helical membrane-spanning segment. At 130-137 (ADIVDQMS) the chain is on the extracellular side. A helical; Voltage-sensor transmembrane segment spans residues 138–158 (PWGMLRIPRPLIMIRAFRIYF). The Cytoplasmic segment spans residues 159–173 (RFELPRTRITNILKR). The helical transmembrane segment at 174–199 (SGEQIWSVSIFLLFFLLLYGILGVQM) threads the bilayer. Residues 200–269 (FGTFTYHCVV…YSGFNEIGTS (70 aa)) are Extracellular-facing. Intrachain disulfides connect Cys207/Cys239 and Cys229/Cys245. Residues Asn210 and Asn216 are each glycosylated (N-linked (GlcNAc...) asparagine). The segment at residues 270 to 289 (IFTVYEAASQEGWVFLMYRA) is an intramembrane region (pore-forming). Residues 290 to 294 (IDSFP) lie on the Extracellular side of the membrane. Residues 295-322 (RWRSYFYFITLIFFLAWLVKNVFIAVII) traverse the membrane as a helical segment. Over 323–382 (ETFAEIRVQFQQMWGSRSSTTSTATTQMFHEDAAGGWQLVAVDVNKPQGRAPACLQKMMR) the chain is Cytoplasmic. Residues 383–403 (SSVFHMFILSMVTVDVIVAAS) form a helical membrane-spanning segment. Over 404 to 416 (NYYKGENFRRQYD) the chain is Extracellular. Residues 417 to 439 (EFYLAEVAFTVLFDLEALLKIWC) traverse the membrane as a helical segment. The Cytoplasmic portion of the chain corresponds to 440 to 447 (LGFTGYIS). A helical membrane pass occupies residues 448–468 (SSLHKFELLLVIGTTLHVYPD). Residues 469 to 472 (LYHS) lie on the Extracellular side of the membrane. A helical; Voltage-sensor transmembrane segment spans residues 473-492 (QFTYFQVLRVVRLIKISPAL). At 493–502 (EDFVYKIFGP) the chain is on the cytoplasmic side. Residues 503-530 (GKKLGSLVVFTASLLIVMSAISLQMFCF) traverse the membrane as a helical segment. At 531–543 (VEELDRFTTFPRA) the chain is on the extracellular side. Positions 544-563 (FMSMFQILTQEGWVDVMDQT) form an intramembrane region, pore-forming. At 564–569 (LNAVGH) the chain is on the extracellular side. Residues 570–599 (MWAPVVAIYFILYHLFATLILLSLFVAVIL) form a helical membrane-spanning segment. At 600-886 (DNLELDEDLK…QLYDLLGLVT (287 aa)) the chain is on the cytoplasmic side. The interval 762–785 (QERRSLRHGSNSQRISRGKSLETL) is disordered. Residues 795 to 830 (YRNAQREDSEIKMIQEKKEQAEMKRKVQEEELRENH) are a coiled coil. A helical transmembrane segment spans residues 887-906 (YLDWVMIIVTICSCISMMFE). The Extracellular segment spans residues 907 to 915 (SPFRRVMHA). A helical membrane pass occupies residues 916–939 (PTLQIAEYVFVIFMSIELNLKIMA). Over 940-947 (DGLFFTPT) the chain is Cytoplasmic. A helical membrane pass occupies residues 948–972 (AVIRDFGGVMDIFIYLVSLIFLCWM). At 973–980 (PQNVPAES) the chain is on the extracellular side. The chain crosses the membrane as a helical; Voltage-sensor span at residues 981-1003 (GAQLLMVLRCLRPLRIFKLVPQM). The Cytoplasmic portion of the chain corresponds to 1004 to 1015 (RKVVRELFSGFK). Residues 1016-1039 (EIFLVSILLLTLMLVFASFGVQLF) form a helical membrane-spanning segment. The Extracellular portion of the chain corresponds to 1040–1104 (AGKLAKCNDP…NFNFDNVGNA (65 aa)). Cys1046 and Cys1057 are oxidised to a cystine. N-linked (GlcNAc...) asparagine glycosylation is present at Asn1064. The segment at residues 1105–1124 (MLALFEVLSLKGWVEVRDVI) is an intramembrane region (pore-forming). Residues 1125–1129 (IHRVG) lie on the Extracellular side of the membrane. Residues 1130–1159 (PIHGIYIHVFVFLGCMIGLTLFVGVVIANF) form a helical membrane-spanning segment. Residues 1160 to 1210 (NENKGTALLTVDQRRWEDLKSRLKIAQPLHLPPRPDNDGFRAKMYDITQHP) are Cytoplasmic-facing. The helical transmembrane segment at 1211–1227 (FFKRTIALLVLAQSVLL) threads the bilayer. The Extracellular portion of the chain corresponds to 1228–1236 (SVKWDVEDP). A helical membrane pass occupies residues 1237 to 1260 (VTVPLATMSVVFTFIFVLEVTMKI). Over 1261–1271 (IAMSPAGFWQS) the chain is Cytoplasmic. A helical membrane pass occupies residues 1272–1293 (RRNRYDLLVTSLGVVWVVLHFA). Residues 1294–1296 (LLN) are Extracellular-facing. A helical; Voltage-sensor transmembrane segment spans residues 1297-1318 (AYTYMMGACVIVFRFFSICGKH). Over 1319 to 1331 (VTLKMLLLTVVVS) the chain is Cytoplasmic. The helical transmembrane segment at 1332–1357 (MYKSFFIIVGMFLLLLCYAFAGVVLF) threads the bilayer. Residues 1358–1378 (GTVKYGENINRHANFSSAGKA) lie on the Extracellular side of the membrane. An intramembrane region (pore-forming) is located at residues 1379-1398 (ITVLFRIVTGEDWNKIMHDC). Residues 1399-1420 (MVQPPFCTPDEFTYWATDCGNY) lie on the Extracellular side of the membrane. An intrachain disulfide couples Cys1405 to Cys1417. The helical transmembrane segment at 1421–1447 (AGALMYFCSFYVIIAYIMLNLLVAIIV) threads the bilayer. The Cytoplasmic segment spans residues 1448–1738 (ENFSLFYSTE…DESGDDLLDI (291 aa)). The disordered stretch occupies residues 1611 to 1678 (PPSIETTQPS…QWRLPSAPKP (68 aa)). Polar residues predominate over residues 1613–1632 (SIETTQPSEDTNANSQDNSM). The span at 1633–1648 (QPETSSQQQLLSPTLS) shows a compositional bias: low complexity.

It belongs to the NALCN family. Found in a complex with NALCN, UNC79, UNC80 and NACL1; these auxiliary subunits are indispensable for the function of NALCN channel. Interacts with UNC80; required for the NALCN activation/inhibition by GPCRs in neurons. Found in a complex with NALCN, UNC79 and UNC80; UNC80 bridges NALCN to UNC79. Interacts with CHRM3. Post-translationally, phosphorylated on tyrosine residues.

The protein localises to the cell membrane. It catalyses the reaction Na(+)(in) = Na(+)(out). Inhibited by low micromolar concentrations of Gd(3+) and high micromolar concentrations of verapamil. Insensitive to tetrodotoxin (TTX) and potentiated by low external Ca(2+) concentration. Its function is as follows. Voltage-gated ion channel responsible for the resting Na(+) permeability that controls neuronal excitability. NALCN channel functions as a multi-protein complex, which consists at least of NALCN, NALF1, UNC79 and UNC80. NALCN is the voltage-sensing, pore-forming subunit of the NALCN channel complex. NALCN channel complex is constitutively active and conducts monovalent cations but is blocked by physiological concentrations of extracellular divalent cations. In addition to its role in regulating neuronal excitability, is required for normal respiratory rhythm, systemic osmoregulation by controlling the serum sodium concentration and in the regulation of the intestinal pace-making activity in the interstitial cells of Cajal. NALCN channel is also activated by neuropeptides such as neurotensin and substance P (SP) through a SRC family kinases-dependent pathway. In addition, NALCN activity is enhanced/modulated by several GPCRs, such as CHRM3. The polypeptide is Sodium leak channel NALCN (Homo sapiens (Human)).